The sequence spans 474 residues: Glutamine synthetase (474 aa).

The 85-residue stretch at 15–99 (EDVQFIDVRF…MTFFIHDPIT (85 aa)) folds into the GS beta-grasp domain. One can recognise a GS catalytic domain in the interval 107–474 (PRNIAKKAET…PYEFTLYYDI (368 aa)). Residues E132 and E134 each contribute to the Mg(2+) site. E210 is a binding site for ATP. The Mg(2+) site is built by E215 and E223. Residues 267–268 (NG) and G268 contribute to the L-glutamate site. H272 contacts Mg(2+). Residues 274 to 276 (HSS) and S276 each bind ATP. Residues R325, E331, and R343 each coordinate L-glutamate. The ATP site is built by R343, R348, and K357. Residue E362 coordinates Mg(2+). An L-glutamate-binding site is contributed by R364. Y402 is modified (O-AMP-tyrosine).

Belongs to the glutamine synthetase family. Oligomer of 12 subunits arranged in the form of two hexagons. Requires Mg(2+) as cofactor.

The protein localises to the cytoplasm. It carries out the reaction L-glutamate + NH4(+) + ATP = L-glutamine + ADP + phosphate + H(+). Its activity is regulated as follows. The activity of this enzyme could be controlled by adenylation under conditions of abundant glutamine. Functionally, catalyzes the ATP-dependent biosynthesis of glutamine from glutamate and ammonia. The protein is Glutamine synthetase of Frankia alni.